The chain runs to 175 residues: Di-N-acetylchitobiase (175 aa).

The N-terminal stretch at 1 to 38 (MARLQLAGSRRLVPLPRRAPRLAPLLLPLLLALPDGAR) is a signal peptide. In terms of domain architecture, GH18 spans 39 to 175 (ADCPCKVPAL…SFHHEIKGSQ (137 aa)). Residue asparagine 115 is glycosylated (N-linked (GlcNAc...) asparagine). The Proton donor role is filled by glutamate 143.

The protein belongs to the glycosyl hydrolase 18 family.

It localises to the lysosome. Functionally, involved in the degradation of asparagine-linked glycoproteins. Hydrolyze of N-acetyl-beta-D-glucosamine (1-4)N-acetylglucosamine chitobiose core from the reducing end of the bond, it requires prior cleavage by glycosylasparaginase. The chain is Di-N-acetylchitobiase (CTBS) from Bos taurus (Bovine).